Reading from the N-terminus, the 242-residue chain is Biosynthetic peptidoglycan transglycosylase (242 aa).

The chain crosses the membrane as a helical span at residues 19 to 39; it reads LMVVLAVFWGGGIALFSVAPV.

It belongs to the glycosyltransferase 51 family.

Its subcellular location is the cell inner membrane. It carries out the reaction [GlcNAc-(1-&gt;4)-Mur2Ac(oyl-L-Ala-gamma-D-Glu-L-Lys-D-Ala-D-Ala)](n)-di-trans,octa-cis-undecaprenyl diphosphate + beta-D-GlcNAc-(1-&gt;4)-Mur2Ac(oyl-L-Ala-gamma-D-Glu-L-Lys-D-Ala-D-Ala)-di-trans,octa-cis-undecaprenyl diphosphate = [GlcNAc-(1-&gt;4)-Mur2Ac(oyl-L-Ala-gamma-D-Glu-L-Lys-D-Ala-D-Ala)](n+1)-di-trans,octa-cis-undecaprenyl diphosphate + di-trans,octa-cis-undecaprenyl diphosphate + H(+). The protein operates within cell wall biogenesis; peptidoglycan biosynthesis. In terms of biological role, peptidoglycan polymerase that catalyzes glycan chain elongation from lipid-linked precursors. This Escherichia coli O157:H7 protein is Biosynthetic peptidoglycan transglycosylase.